Reading from the N-terminus, the 224-residue chain is MASEFSGQIQELLSRIPPVTRYILLGTAATTILTLCQLLSPSMLVLHYPLVVRQKQWYRLFTNYLYAGTGFDFIMNIYFFYQYSTYLENFVFARNAKKYIIYLVKVALLIDAFSLISGLGSALNQSLAAAIAYNWSLFNSFSKIQFLFGFHVQGKYLPYVLLGFSFLTGGLPSLVVLGFGIISAMIVNFFDSIHTPVVHRSNSPKLNSQKVSGTFIGKGKKLGT.

A run of 5 helical transmembrane segments spans residues 32-52, 60-80, 100-120, 130-150, and 162-182; these read ILTL…PLVV, LFTN…IYFF, IIYL…SGLG, AIAY…LFGF, and LGFS…FGII.

The protein belongs to the derlin family.

The protein resides in the endoplasmic reticulum membrane. This is an uncharacterized protein from Schizosaccharomyces pombe (strain 972 / ATCC 24843) (Fission yeast).